The following is a 123-amino-acid chain: Steroid Delta-isomerase (123 aa).

Tyr-12 (proton donor) is an active-site residue. The active-site Proton acceptor is Asp-36. Position 96 (Asp-96) interacts with substrate.

As to quaternary structure, homodimer.

It catalyses the reaction a 3-oxo-Delta(5)-steroid = a 3-oxo-Delta(4)-steroid. The polypeptide is Steroid Delta-isomerase (ksdI) (Nocardioides simplex (Arthrobacter simplex)).